Reading from the N-terminus, the 84-residue chain is Cryptic plasmid protein A (84 aa).

In Neisseria gonorrhoeae, this protein is Cryptic plasmid protein A (cppA).